The following is a 274-amino-acid chain: 2-dehydro-3-deoxyphosphooctonate aldolase (274 aa).

The protein belongs to the KdsA family.

The protein localises to the cytoplasm. It carries out the reaction D-arabinose 5-phosphate + phosphoenolpyruvate + H2O = 3-deoxy-alpha-D-manno-2-octulosonate-8-phosphate + phosphate. The protein operates within carbohydrate biosynthesis; 3-deoxy-D-manno-octulosonate biosynthesis; 3-deoxy-D-manno-octulosonate from D-ribulose 5-phosphate: step 2/3. It participates in bacterial outer membrane biogenesis; lipopolysaccharide biosynthesis. This chain is 2-dehydro-3-deoxyphosphooctonate aldolase, found in Rickettsia typhi (strain ATCC VR-144 / Wilmington).